Here is a 213-residue protein sequence, read N- to C-terminus: Thymidylate kinase (213 aa).

7–14 (GMDGSGKT) serves as a coordination point for ATP.

The protein belongs to the thymidylate kinase family.

It carries out the reaction dTMP + ATP = dTDP + ADP. Phosphorylation of dTMP to form dTDP in both de novo and salvage pathways of dTTP synthesis. The polypeptide is Thymidylate kinase (Mycoplasma capricolum subsp. capricolum (strain California kid / ATCC 27343 / NCTC 10154)).